The chain runs to 94 residues: Co-chaperonin GroES (94 aa).

The protein belongs to the GroES chaperonin family. In terms of assembly, heptamer of 7 subunits arranged in a ring. Interacts with the chaperonin GroEL.

Its subcellular location is the cytoplasm. In terms of biological role, together with the chaperonin GroEL, plays an essential role in assisting protein folding. The GroEL-GroES system forms a nano-cage that allows encapsulation of the non-native substrate proteins and provides a physical environment optimized to promote and accelerate protein folding. GroES binds to the apical surface of the GroEL ring, thereby capping the opening of the GroEL channel. The polypeptide is Co-chaperonin GroES (Streptococcus pneumoniae (strain ATCC BAA-255 / R6)).